A 354-amino-acid polypeptide reads, in one-letter code: Arginase-2, mitochondrial (354 aa).

The transit peptide at 1–22 (MSLRGSLSRLLQTRVHSILKKS) directs the protein to the mitochondrion. Residues His-120, Asp-143, His-145, and Asp-147 each coordinate Mn(2+). Substrate-binding positions include 145–149 (HADIN), 156–158 (SGN), and Asp-202. Asp-251 and Asp-253 together coordinate Mn(2+). Thr-265 and Glu-296 together coordinate substrate. Residues 334–354 (YDQLPTPSSPDESENQARVRI) are disordered.

This sequence belongs to the arginase family. As to quaternary structure, homotrimer. Requires Mn(2+) as cofactor. Expressed most strongly in kidney and prostate, much less strongly in the brain, skeletal muscle, placenta, lung, mammary gland, macrophage, uterus, testis and gut, but apparently not in the liver, heart and pancreas. Expressed in activated T cells.

It is found in the mitochondrion. It catalyses the reaction L-arginine + H2O = urea + L-ornithine. The protein operates within nitrogen metabolism; urea cycle; L-ornithine and urea from L-arginine: step 1/1. In terms of biological role, may play a role in the regulation of extra-urea cycle arginine metabolism and also in down-regulation of nitric oxide synthesis. Extrahepatic arginase functions to regulate L-arginine bioavailability to nitric oxid synthase (NOS). Arginine metabolism is a critical regulator of innate and adaptive immune responses. Seems to be involved in negative regulation of the survival capacity of activated CD4(+) and CD8(+) T cells. May suppress inflammation-related signaling in asthmatic airway epithelium. May contribute to the immune evasion of H.pylori by restricting M1 macrophage activation and polyamine metabolism. In fetal dendritic cells may play a role in promoting immune suppression and T cell TNF-alpha production during gestation. Regulates RPS6KB1 signaling, which promotes endothelial cell senescence and inflammation and implicates NOS3/eNOS dysfunction. Can inhibit endothelial autophagy independently of its enzymatic activity implicating mTORC2 signaling. Involved in vascular smooth muscle cell senescence and apoptosis independently of its enzymatic activity. Since NOS is found in the penile corpus cavernosum smooth muscle, the clitoral corpus cavernosum and the vagina, arginase-2 plays a role in both male and female sexual arousal. The sequence is that of Arginase-2, mitochondrial (ARG2) from Homo sapiens (Human).